A 312-amino-acid chain; its full sequence is Methionyl-tRNA formyltransferase (312 aa).

Residue 113–116 (SILP) participates in (6S)-5,6,7,8-tetrahydrofolate binding.

Belongs to the Fmt family.

It catalyses the reaction L-methionyl-tRNA(fMet) + (6R)-10-formyltetrahydrofolate = N-formyl-L-methionyl-tRNA(fMet) + (6S)-5,6,7,8-tetrahydrofolate + H(+). Its function is as follows. Attaches a formyl group to the free amino group of methionyl-tRNA(fMet). The formyl group appears to play a dual role in the initiator identity of N-formylmethionyl-tRNA by promoting its recognition by IF2 and preventing the misappropriation of this tRNA by the elongation apparatus. This Hydrogenovibrio crunogenus (strain DSM 25203 / XCL-2) (Thiomicrospira crunogena) protein is Methionyl-tRNA formyltransferase.